Here is a 353-residue protein sequence, read N- to C-terminus: Photosystem II protein D1 (353 aa).

Threonine 2 carries the N-acetylthreonine modification. Threonine 2 bears the Phosphothreonine mark. 3 helical membrane-spanning segments follow: residues 29–46 (YIGW…TATS), 118–133 (HFLL…EWEL), and 142–156 (WIAV…AATA). Histidine 118 lines the chlorophyll a pocket. Tyrosine 126 serves as a coordination point for pheophytin a. [CaMn4O5] cluster contacts are provided by aspartate 170 and glutamate 189. A helical membrane pass occupies residues 197-218 (FHMLGVAGVFGGSLFSAMHGSL). Histidine 198 serves as a coordination point for chlorophyll a. Residues histidine 215 and 264–265 (SF) each bind a quinone. Fe cation is bound at residue histidine 215. Residue histidine 272 coordinates Fe cation. Residues 274–288 (FLAAWPVVGIWFTAL) form a helical membrane-spanning segment. Residues histidine 332, glutamate 333, aspartate 342, and alanine 344 each contribute to the [CaMn4O5] cluster site. Residues 345–353 (AVEANSIDG) constitute a propeptide that is removed on maturation.

The protein belongs to the reaction center PufL/M/PsbA/D family. PSII is composed of 1 copy each of membrane proteins PsbA, PsbB, PsbC, PsbD, PsbE, PsbF, PsbH, PsbI, PsbJ, PsbK, PsbL, PsbM, PsbT, PsbX, PsbY, PsbZ, Psb30/Ycf12, at least 3 peripheral proteins of the oxygen-evolving complex and a large number of cofactors. It forms dimeric complexes. It depends on The D1/D2 heterodimer binds P680, chlorophylls that are the primary electron donor of PSII, and subsequent electron acceptors. It shares a non-heme iron and each subunit binds pheophytin, quinone, additional chlorophylls, carotenoids and lipids. D1 provides most of the ligands for the Mn4-Ca-O5 cluster of the oxygen-evolving complex (OEC). There is also a Cl(-1) ion associated with D1 and D2, which is required for oxygen evolution. The PSII complex binds additional chlorophylls, carotenoids and specific lipids. as a cofactor. In terms of processing, tyr-161 forms a radical intermediate that is referred to as redox-active TyrZ, YZ or Y-Z. C-terminally processed by CTPA; processing is essential to allow assembly of the oxygen-evolving complex and thus photosynthetic growth.

It is found in the plastid. Its subcellular location is the chloroplast thylakoid membrane. The catalysed reaction is 2 a plastoquinone + 4 hnu + 2 H2O = 2 a plastoquinol + O2. Its function is as follows. Photosystem II (PSII) is a light-driven water:plastoquinone oxidoreductase that uses light energy to abstract electrons from H(2)O, generating O(2) and a proton gradient subsequently used for ATP formation. It consists of a core antenna complex that captures photons, and an electron transfer chain that converts photonic excitation into a charge separation. The D1/D2 (PsbA/PsbD) reaction center heterodimer binds P680, the primary electron donor of PSII as well as several subsequent electron acceptors. The protein is Photosystem II protein D1 of Cryptomeria japonica (Japanese cedar).